We begin with the raw amino-acid sequence, 80 residues long: Small ribosomal subunit protein bS18 (80 aa).

This sequence belongs to the bacterial ribosomal protein bS18 family. Part of the 30S ribosomal subunit. Forms a tight heterodimer with protein bS6.

In terms of biological role, binds as a heterodimer with protein bS6 to the central domain of the 16S rRNA, where it helps stabilize the platform of the 30S subunit. The protein is Small ribosomal subunit protein bS18 of Staphylococcus haemolyticus (strain JCSC1435).